The following is an 81-amino-acid chain: UPF0729 protein C18orf32 homolog (81 aa).

Residues 45–58 are compositionally biased toward polar residues; the sequence is AASDQKVSEKSNGT. Residues 45–81 form a disordered region; the sequence is AASDQKVSEKSNGTCKPESNGEATANGSTIAADKKTD.

It belongs to the UPF0729 family.

The polypeptide is UPF0729 protein C18orf32 homolog (Anoplopoma fimbria (Sablefish)).